Consider the following 226-residue polypeptide: Clarin-3 (226 aa).

Residues 8 to 28 (LMFLSGFLTSLGSVVVICSIL) traverse the membrane as a helical segment. Asn46 and Asn83 each carry an N-linked (GlcNAc...) asparagine glycan. 3 consecutive transmembrane segments (helical) span residues 92–112 (VVII…MFTF), 128–148 (GVYT…VLFV), and 181–201 (FWLI…IIFY).

This sequence belongs to the clarin family.

It localises to the membrane. The protein is Clarin-3 (Clrn3) of Rattus norvegicus (Rat).